Consider the following 29-residue polypeptide: NADP phosphatase 1 (29 aa).

In terms of assembly, homodimer.

It localises to the cytoplasm. The polypeptide is NADP phosphatase 1 (Arthrobacter sp. (strain KM)).